Consider the following 316-residue polypeptide: 4-hydroxy-3-methylbut-2-enyl diphosphate reductase (316 aa).

C12 is a binding site for [4Fe-4S] cluster. (2E)-4-hydroxy-3-methylbut-2-enyl diphosphate-binding residues include H41 and H74. Dimethylallyl diphosphate-binding residues include H41 and H74. The isopentenyl diphosphate site is built by H41 and H74. C96 contributes to the [4Fe-4S] cluster binding site. H124 is a binding site for (2E)-4-hydroxy-3-methylbut-2-enyl diphosphate. H124 contacts dimethylallyl diphosphate. Residue H124 coordinates isopentenyl diphosphate. The Proton donor role is filled by E126. T167 is a binding site for (2E)-4-hydroxy-3-methylbut-2-enyl diphosphate. Residue C197 participates in [4Fe-4S] cluster binding. The (2E)-4-hydroxy-3-methylbut-2-enyl diphosphate site is built by S225, S226, N227, and S269. 4 residues coordinate dimethylallyl diphosphate: S225, S226, N227, and S269. Isopentenyl diphosphate contacts are provided by S225, S226, N227, and S269.

This sequence belongs to the IspH family. Homodimer. [4Fe-4S] cluster is required as a cofactor.

It carries out the reaction isopentenyl diphosphate + 2 oxidized [2Fe-2S]-[ferredoxin] + H2O = (2E)-4-hydroxy-3-methylbut-2-enyl diphosphate + 2 reduced [2Fe-2S]-[ferredoxin] + 2 H(+). The catalysed reaction is dimethylallyl diphosphate + 2 oxidized [2Fe-2S]-[ferredoxin] + H2O = (2E)-4-hydroxy-3-methylbut-2-enyl diphosphate + 2 reduced [2Fe-2S]-[ferredoxin] + 2 H(+). Its pathway is isoprenoid biosynthesis; dimethylallyl diphosphate biosynthesis; dimethylallyl diphosphate from (2E)-4-hydroxy-3-methylbutenyl diphosphate: step 1/1. The protein operates within isoprenoid biosynthesis; isopentenyl diphosphate biosynthesis via DXP pathway; isopentenyl diphosphate from 1-deoxy-D-xylulose 5-phosphate: step 6/6. Catalyzes the conversion of 1-hydroxy-2-methyl-2-(E)-butenyl 4-diphosphate (HMBPP) into a mixture of isopentenyl diphosphate (IPP) and dimethylallyl diphosphate (DMAPP). Acts in the terminal step of the DOXP/MEP pathway for isoprenoid precursor biosynthesis. This is 4-hydroxy-3-methylbut-2-enyl diphosphate reductase from Shigella flexneri serotype 5b (strain 8401).